A 102-amino-acid polypeptide reads, in one-letter code: Small ribosomal subunit protein uS10 (102 aa).

This sequence belongs to the universal ribosomal protein uS10 family. In terms of assembly, part of the 30S ribosomal subunit.

In terms of biological role, involved in the binding of tRNA to the ribosomes. This Streptococcus pyogenes serotype M12 (strain MGAS2096) protein is Small ribosomal subunit protein uS10.